Reading from the N-terminus, the 274-residue chain is Karrikin insensitive 2 receptor IA (274 aa).

Catalysis depends on S95, which acts as the Nucleophile. Active-site residues include D217 and H246.

It belongs to the AB hydrolase superfamily. As to quaternary structure, interacts with MAX2A and MAX2B in the presence of (-)-germacrene D, thus forming an E3 SCF ubiquitin ligase complex (ASK-cullin-F-box) containing MAX2A or MAX2B and KAI2IA recognizing SMAX1A; this leads to the subsequent degradation of the transcriptional corepressor SMAX1A, thus triggering the activation of a downstream signaling cascade. As to expression, strongly expressed in stigma.

Its subcellular location is the nucleus. The protein resides in the cytoplasm. With respect to regulation, hydrolysis activity toward yoshimulactone green (YLG), a fluorescent agonist to strigolactone receptor, is inhibited by (-)-germacrene D and GR24, a synthetic strigolactone analog. Its function is as follows. Hydrolase involved in the olfaction of sesquiterpene volatile organic compounds (VOCs) during volatile plant communication in a MAX2 proteins-dependent manner. Acts as a karrikin-insensitive receptor that stereospecifically perceives and binds to (-)-germacrene D, particularly in stigmas, and triggers a signaling cascade influencing plant fitness, as the result of reproductive organ growth-promoting effect; this process involves an interaction with MAX2 proteins (e.g. MAX2A and MAX2B) and the subsequent degradation of SMAX1a, a transcriptional corepressor. The chain is Karrikin insensitive 2 receptor IA from Petunia hybrida (Petunia).